We begin with the raw amino-acid sequence, 418 residues long: L-rhamnose isomerase (418 aa).

Histidine 262, aspartate 294, and aspartate 296 together coordinate Mn(2+).

The protein belongs to the rhamnose isomerase family. Mn(2+) serves as cofactor.

Its subcellular location is the cytoplasm. The catalysed reaction is L-rhamnopyranose = L-rhamnulose. It functions in the pathway carbohydrate degradation; L-rhamnose degradation; glycerone phosphate from L-rhamnose: step 1/3. In terms of biological role, catalyzes the interconversion of L-rhamnose and L-rhamnulose. In Bacteroides thetaiotaomicron (strain ATCC 29148 / DSM 2079 / JCM 5827 / CCUG 10774 / NCTC 10582 / VPI-5482 / E50), this protein is L-rhamnose isomerase.